We begin with the raw amino-acid sequence, 322 residues long: Cytochrome f (322 aa).

An N-terminal signal peptide occupies residues Met1–Ala37. Residues Tyr38, Cys58, Cys61, and His62 each coordinate heme. The helical transmembrane segment at Val285 to Leu307 threads the bilayer.

It belongs to the cytochrome f family. In terms of assembly, the 4 large subunits of the cytochrome b6-f complex are cytochrome b6, subunit IV (17 kDa polypeptide, petD), cytochrome f and the Rieske protein, while the 4 small subunits are PetG, PetL, PetM and PetN. The complex functions as a dimer. It depends on heme as a cofactor.

Its subcellular location is the plastid. It is found in the chloroplast thylakoid membrane. Functionally, component of the cytochrome b6-f complex, which mediates electron transfer between photosystem II (PSII) and photosystem I (PSI), cyclic electron flow around PSI, and state transitions. This Anthoceros angustus (Hornwort) protein is Cytochrome f (petA).